The following is a 344-amino-acid chain: tRNA N6-adenosine threonylcarbamoyltransferase (344 aa).

Histidine 118 and histidine 122 together coordinate Fe cation. Residues 141 to 145 (TASGG), aspartate 174, glycine 187, and asparagine 284 contribute to the substrate site. Residue aspartate 312 participates in Fe cation binding.

The protein belongs to the KAE1 / TsaD family. The cofactor is Fe(2+).

The protein localises to the cytoplasm. It catalyses the reaction L-threonylcarbamoyladenylate + adenosine(37) in tRNA = N(6)-L-threonylcarbamoyladenosine(37) in tRNA + AMP + H(+). Required for the formation of a threonylcarbamoyl group on adenosine at position 37 (t(6)A37) in tRNAs that read codons beginning with adenine. Is involved in the transfer of the threonylcarbamoyl moiety of threonylcarbamoyl-AMP (TC-AMP) to the N6 group of A37, together with TsaE and TsaB. TsaD likely plays a direct catalytic role in this reaction. The protein is tRNA N6-adenosine threonylcarbamoyltransferase of Desulfotalea psychrophila (strain LSv54 / DSM 12343).